The following is a 388-amino-acid chain: MGKKAIQFGGGNIGRGFVAEFLHKAGYEVVFVDVMDKMVEALQQNKSYKVTEVSEEGEHTTTITNYRAINSKTHESDVIQEIATADVVTCAVGPHILKFIAPVIAKGIDARTESKPVAVIACENAIGATDTLHGFIKQHTSQDRVESLYDRAQFANSAIDRIVPQQAPNSGLDVRIEKFYEWAVEKTPFGSVGHPDIPAIHWVDNLEPYIERKLFTVNTSHATTAYFGHFRGKKMIADALEDEEIRGLVHKVLEETASLIVAKHDISEEEQKEYVKKIVSRISNPYLEDKVERVGRAPLRKLSRKERFIGPASQLAERGMKYDSLMDAVEMALRFQNVPGDDESAELANILNEQRAEDATIHLTGLDEEHPLYPAVLERVRKVQQGTK.

5-16 is a binding site for NAD(+); that stretch reads AIQFGGGNIGRG. The active site involves Lys-213.

It belongs to the mannitol dehydrogenase family. In terms of assembly, monomer.

It carries out the reaction D-mannitol 1-phosphate + NAD(+) = beta-D-fructose 6-phosphate + NADH + H(+). Functionally, catalyzes the NAD(H)-dependent interconversion of D-fructose 6-phosphate and D-mannitol 1-phosphate in the mannitol metabolic pathway. Has a strong preference for NADH over NADPH. Required for protection of conidiospores against exogenous stresses such as high temperatures and an oxidative environment. This chain is Mannitol-1-phosphate 5-dehydrogenase (mpdA), found in Aspergillus niger.